The chain runs to 143 residues: Pathogenesis-related protein P2 (143 aa).

The signal sequence occupies residues 1 to 23 (MERVNKLCVAFFVINMMMAVAAA). Residues 24–143 (QSATNVRATY…LNVNYEFVNC (120 aa)) enclose the Barwin domain. 3 disulfide bridges follow: C52–C84, C73–C107, and C87–C143.

The protein localises to the secreted. It localises to the cell wall. This is Pathogenesis-related protein P2 from Solanum lycopersicum (Tomato).